The following is a 219-amino-acid chain: Exosomal polycystin-1-interacting protein (219 aa).

The N-terminal stretch at 1–19 (MAPPSRHCLLLISTLGVFA) is a signal peptide. Residues N29, N42, N95, N188, and N210 are each glycosylated (N-linked (GlcNAc...) asparagine).

It belongs to the EPCIP family. In terms of assembly, homooligomer. Interacts with PKD1 (via the PKD repeats in the N-terminal extracellular region); the interaction is not dependent on N-glycosylation of either protein. N-glycosylated. As to expression, detected in the kidney and in the endothelium of large blood vessels (at protein level).

It localises to the vesicle. The protein resides in the secreted. The protein localises to the extracellular exosome. Its function is as follows. Likely to be involved with PKD1 in the detection, sequestration and exocytosis of senescent mitochondria. This Homo sapiens (Human) protein is Exosomal polycystin-1-interacting protein.